The following is a 296-amino-acid chain: Bifunctional protein FolD (296 aa).

NADP(+)-binding positions include 166-168, S195, and T236; that span reads GRS.

This sequence belongs to the tetrahydrofolate dehydrogenase/cyclohydrolase family. Homodimer.

The enzyme catalyses (6R)-5,10-methylene-5,6,7,8-tetrahydrofolate + NADP(+) = (6R)-5,10-methenyltetrahydrofolate + NADPH. It catalyses the reaction (6R)-5,10-methenyltetrahydrofolate + H2O = (6R)-10-formyltetrahydrofolate + H(+). The protein operates within one-carbon metabolism; tetrahydrofolate interconversion. Functionally, catalyzes the oxidation of 5,10-methylenetetrahydrofolate to 5,10-methenyltetrahydrofolate and then the hydrolysis of 5,10-methenyltetrahydrofolate to 10-formyltetrahydrofolate. This is Bifunctional protein FolD from Dehalococcoides mccartyi (strain CBDB1).